The primary structure comprises 141 residues: Neuropeptides CP2 (141 aa).

An N-terminal signal peptide occupies residues 1–26; the sequence is MDSRICTSFARLMASALCVSTLLVTA. The segment at 75–94 is disordered; the sequence is KVDMPLPRQRTSSRSSERWA. A Histidine amide modification is found at His-140.

As to expression, neurons.

The protein resides in the secreted. Functionally, mediates intrinsic neuromodulation. The sequence is that of Neuropeptides CP2 (CP2PP) from Aplysia californica (California sea hare).